The primary structure comprises 327 residues: Olfactory receptor 51T1 (327 aa).

Topologically, residues 1 to 27 (MAIFNNTTSSSSNFLLTAFPGLECAHV) are extracellular. Asn5 and Asn6 each carry an N-linked (GlcNAc...) asparagine glycan. Residues 28 to 48 (WISIPVCCLYTIALLGNSMIF) traverse the membrane as a helical segment. Over 49-56 (LVIITKRR) the chain is Cytoplasmic. The helical transmembrane segment at 57 to 77 (LHKPMYYFLSMLAAVDLCLTI) threads the bilayer. The Extracellular portion of the chain corresponds to 78–101 (TTLPTVLGVLWFHAREISFKACFI). Residues 102–122 (QMFFVHAFSLLESSVLVAMAF) traverse the membrane as a helical segment. Over 123–141 (DRFVAICNPLNYATILTDR) the chain is Cytoplasmic. The chain crosses the membrane as a helical span at residues 142-162 (MVLVIGLVICIRPAVFLLPLL). Over 163 to 198 (VAINTVSFHGGHELSHPFCYHPEVIKYTYSKPWISS) the chain is Extracellular. A helical membrane pass occupies residues 199–219 (FWGLFLQLYLNGTDVLFILFS). Residues 220-239 (YVLILRTVLGIVARKKQQKA) are Cytoplasmic-facing. The chain crosses the membrane as a helical span at residues 240 to 260 (LSTCVCHICAVTIFYVPLISL). The Extracellular segment spans residues 261 to 275 (SLAHRLFHSTPRVLC). A helical transmembrane segment spans residues 276–296 (STLANIYLLLPPVLNPIIYSL). At 297–327 (KTKTIRQAMFQLLQSKGSWGFNVRGLRGRWD) the chain is on the cytoplasmic side.

Belongs to the G-protein coupled receptor 1 family.

The protein resides in the cell membrane. In terms of biological role, odorant receptor. In Homo sapiens (Human), this protein is Olfactory receptor 51T1 (OR51T1).